The following is a 280-amino-acid chain: Probable aquaporin PIP2-8 (280 aa).

Residues 1-21 are disordered; the sequence is MAAGSGSGSNPKDYQDPPPAP. Transmembrane regions (helical) follow at residues 36-56 and 70-92; these read AAIA…STVI and LGIA…GISG. Positions 96 to 98 match the NPA 1 motif; that stretch reads NPA. 3 helical membrane-spanning segments follow: residues 113–135, 156–176, and 192–212; these read RAAL…ARAM, SAGA…YTVF, and VLAP…TIPI. The NPA 2 motif lies at 218–220; the sequence is NPA. A helical membrane pass occupies residues 236–256; it reads AWSHLWIFWVGPFAGAAAAMI.

Belongs to the MIP/aquaporin (TC 1.A.8) family. PIP (TC 1.A.8.11) subfamily. Expressed in leaves and at lower levels in roots.

The protein resides in the cell membrane. Its function is as follows. Aquaporins facilitate the transport of water and small neutral solutes across cell membranes. The protein is Probable aquaporin PIP2-8 (PIP2-8) of Oryza sativa subsp. japonica (Rice).